Here is a 553-residue protein sequence, read N- to C-terminus: uncharacterized protein (553 aa).

5 helical membrane passes run 13-30, 37-59, 69-91, 98-120, and 157-179; these read ALQA…GLGL, GISL…GLSI, SFGL…FSSF, LNML…SYTT, and TPAL…AVLL. 2 RCK C-terminal domains span residues 190 to 273 and 281 to 365; these read LEVQ…LFGE and KEDI…VLGN. Transmembrane regions (helical) follow at residues 375-397, 402-424, 436-458, 468-490, 497-514, and 529-551; these read LVAV…SIPG, VRLG…GPRL, LMLR…GAHF, LLWI…FFAF, FGSV…PMAL, and AYAT…LLMF.

This sequence belongs to the AAE transporter (TC 2.A.81) family.

The protein resides in the cell membrane. This is an uncharacterized protein from Bacteroides fragilis (strain YCH46).